The sequence spans 57 residues: Small ribosomal subunit protein bS21 (57 aa).

The interval 35-57 (REFYEKPSVRRKKKSEAARKRKY) is disordered. Basic residues predominate over residues 43–57 (VRRKKKSEAARKRKY).

It belongs to the bacterial ribosomal protein bS21 family.

This chain is Small ribosomal subunit protein bS21, found in Bacillus licheniformis (strain ATCC 14580 / DSM 13 / JCM 2505 / CCUG 7422 / NBRC 12200 / NCIMB 9375 / NCTC 10341 / NRRL NRS-1264 / Gibson 46).